Consider the following 168-residue polypeptide: ATP synthase subunit b, chloroplastic (168 aa).

Residues 20–37 traverse the membrane as a helical segment; it reads LNLAVVLPIVFTLGRDTL.

It belongs to the ATPase B chain family. In terms of assembly, F-type ATPases have 2 components, F(1) - the catalytic core - and F(0) - the membrane proton channel. F(1) has five subunits: alpha(3), beta(3), gamma(1), delta(1), epsilon(1). F(0) has four main subunits: a(1), b(1), b'(1) and c(10-14). The alpha and beta chains form an alternating ring which encloses part of the gamma chain. F(1) is attached to F(0) by a central stalk formed by the gamma and epsilon chains, while a peripheral stalk is formed by the delta, b and b' chains.

The protein resides in the plastid. The protein localises to the chloroplast thylakoid membrane. Functionally, f(1)F(0) ATP synthase produces ATP from ADP in the presence of a proton or sodium gradient. F-type ATPases consist of two structural domains, F(1) containing the extramembraneous catalytic core and F(0) containing the membrane proton channel, linked together by a central stalk and a peripheral stalk. During catalysis, ATP synthesis in the catalytic domain of F(1) is coupled via a rotary mechanism of the central stalk subunits to proton translocation. Component of the F(0) channel, it forms part of the peripheral stalk, linking F(1) to F(0). This chain is ATP synthase subunit b, chloroplastic, found in Ostreococcus tauri.